The primary structure comprises 1500 residues: Synaptonemal complex protein 2 (1500 aa).

2 positions are modified to phosphoserine: serine 457 and serine 458. Threonine 464 carries the post-translational modification Phosphothreonine. Serine 487 is subject to Phosphoserine. The residue at position 496 (threonine 496) is a Phosphothreonine. Residues serine 500, serine 509, serine 518, and serine 527 each carry the phosphoserine modification. The segment at 512–548 is disordered; that stretch reads KAVSKTSESGMDYAASPKSRQSDGRKRWNNRANHNKT. A phosphothreonine mark is found at threonine 608 and threonine 633. Serine 646, serine 650, and serine 741 each carry phosphoserine. A disordered region spans residues 796 to 820; it reads NPSDSMMSTRKLKEPQDGSGFSKKP. Phosphoserine is present on serine 914. A Phosphothreonine modification is found at threonine 916. 2 disordered regions span residues 940–1010 and 1029–1084; these read LMDY…TSES and KEET…SASV. The segment covering 948 to 958 has biased composition (basic residues); that stretch reads NTTKYKSRKSR. Basic and acidic residues predominate over residues 977 to 989; the sequence is MKNDYEVVVDGRT. Residues 990-1000 show a composition bias toward basic residues; it reads RLPRRATKTKK. Over residues 1059–1076 the composition is skewed to basic and acidic residues; sequence PSEEQKNSSRLREGREDS. Residues serine 1115, serine 1117, serine 1124, serine 1133, serine 1140, serine 1144, serine 1156, serine 1159, and serine 1164 each carry the phosphoserine modification. Threonine 1168 is subject to Phosphothreonine. Phosphoserine occurs at positions 1183, 1213, and 1216. Residues 1208-1234 are disordered; that stretch reads YMEPESPESCDNHMQNKREGNHAASPL. Residues 1217-1228 are compositionally biased toward basic and acidic residues; the sequence is CDNHMQNKREGN. 3 positions are modified to phosphoserine: serine 1232, serine 1275, and serine 1277. Residue threonine 1313 is modified to Phosphothreonine. Residues 1388 to 1429 are a coiled coil; sequence LLDELEKVEKDSQTLRDLEKELVDIEEKLVQKMRAYHRCERE.

This sequence belongs to the SYCP2 family. As to quaternary structure, component of the lateral elements of synaptonemal complexes. Heterodimer with SYCP3. Interacts with SMC1A and SMC3. Interacts with TEX11. Phosphorylated. Detected in testis and spermatocytes (at protein level).

The protein resides in the nucleus. The protein localises to the chromosome. Functionally, major component of the axial/lateral elements of synaptonemal complexes (SCS) during meiotic prophase. Plays a role in the assembly of synaptonemal complexes. Required for normal meiotic chromosome synapsis during oocyte and spermatocyte development and for normal male and female fertility. Required for insertion of SYCP3 into synaptonemal complexes. May be involved in the organization of chromatin by temporarily binding to DNA scaffold attachment regions. Requires SYCP3, but not SYCP1, in order to be incorporated into the axial/lateral elements. In Mus musculus (Mouse), this protein is Synaptonemal complex protein 2 (Sycp2).